The following is a 309-amino-acid chain: Ribonuclease Z (309 aa).

Residues H63, H65, D67, H68, H145, D216, and H274 each contribute to the Zn(2+) site. D67 serves as the catalytic Proton acceptor.

It belongs to the RNase Z family. In terms of assembly, homodimer. The cofactor is Zn(2+).

The catalysed reaction is Endonucleolytic cleavage of RNA, removing extra 3' nucleotides from tRNA precursor, generating 3' termini of tRNAs. A 3'-hydroxy group is left at the tRNA terminus and a 5'-phosphoryl group is left at the trailer molecule.. Its function is as follows. Zinc phosphodiesterase, which displays some tRNA 3'-processing endonuclease activity. Probably involved in tRNA maturation, by removing a 3'-trailer from precursor tRNA. The protein is Ribonuclease Z of Streptococcus pneumoniae serotype 2 (strain D39 / NCTC 7466).